The primary structure comprises 276 residues: Urease accessory protein UreD (276 aa).

Belongs to the UreD family. As to quaternary structure, ureD, UreF and UreG form a complex that acts as a GTP-hydrolysis-dependent molecular chaperone, activating the urease apoprotein by helping to assemble the nickel containing metallocenter of UreC. The UreE protein probably delivers the nickel.

It is found in the cytoplasm. Functionally, required for maturation of urease via the functional incorporation of the urease nickel metallocenter. The protein is Urease accessory protein UreD of Polaromonas sp. (strain JS666 / ATCC BAA-500).